A 300-amino-acid chain; its full sequence is Small ribosomal subunit protein uS2 (300 aa).

Positions 228-300 (RAGLSADKDA…PAAEAPSTEA (73 aa)) are disordered. Over residues 258-300 (AAPAAEAAPAAEAAPAAEAAPAAEAQAAPAAEAPAAEAPSTEA) the composition is skewed to low complexity.

It belongs to the universal ribosomal protein uS2 family.

The sequence is that of Small ribosomal subunit protein uS2 from Rhodococcus jostii (strain RHA1).